The primary structure comprises 251 residues: Tryptophan synthase alpha chain (251 aa).

Catalysis depends on proton acceptor residues Glu46 and Asp57.

Belongs to the TrpA family. As to quaternary structure, tetramer of two alpha and two beta chains.

The enzyme catalyses (1S,2R)-1-C-(indol-3-yl)glycerol 3-phosphate + L-serine = D-glyceraldehyde 3-phosphate + L-tryptophan + H2O. It functions in the pathway amino-acid biosynthesis; L-tryptophan biosynthesis; L-tryptophan from chorismate: step 5/5. In terms of biological role, the alpha subunit is responsible for the aldol cleavage of indoleglycerol phosphate to indole and glyceraldehyde 3-phosphate. The protein is Tryptophan synthase alpha chain of Karelsulcia muelleri (strain GWSS) (Sulcia muelleri).